Reading from the N-terminus, the 198-residue chain is Imidazoleglycerol-phosphate dehydratase (198 aa).

Belongs to the imidazoleglycerol-phosphate dehydratase family.

The protein localises to the cytoplasm. The catalysed reaction is D-erythro-1-(imidazol-4-yl)glycerol 3-phosphate = 3-(imidazol-4-yl)-2-oxopropyl phosphate + H2O. Its pathway is amino-acid biosynthesis; L-histidine biosynthesis; L-histidine from 5-phospho-alpha-D-ribose 1-diphosphate: step 6/9. This Gluconacetobacter diazotrophicus (strain ATCC 49037 / DSM 5601 / CCUG 37298 / CIP 103539 / LMG 7603 / PAl5) protein is Imidazoleglycerol-phosphate dehydratase.